The primary structure comprises 105 residues: Phosphoribosyl-AMP cyclohydrolase (105 aa).

Residue Asp-72 participates in Mg(2+) binding. Cys-73 contacts Zn(2+). Residues Asp-74 and Asp-76 each contribute to the Mg(2+) site. Zn(2+) contacts are provided by Cys-89 and Cys-96.

It belongs to the PRA-CH family. As to quaternary structure, homodimer. The cofactor is Mg(2+). Requires Zn(2+) as cofactor.

The protein resides in the cytoplasm. It catalyses the reaction 1-(5-phospho-beta-D-ribosyl)-5'-AMP + H2O = 1-(5-phospho-beta-D-ribosyl)-5-[(5-phospho-beta-D-ribosylamino)methylideneamino]imidazole-4-carboxamide. Its pathway is amino-acid biosynthesis; L-histidine biosynthesis; L-histidine from 5-phospho-alpha-D-ribose 1-diphosphate: step 3/9. In terms of biological role, catalyzes the hydrolysis of the adenine ring of phosphoribosyl-AMP. This chain is Phosphoribosyl-AMP cyclohydrolase, found in Listeria monocytogenes serovar 1/2a (strain ATCC BAA-679 / EGD-e).